A 217-amino-acid chain; its full sequence is Nuclear transcription factor Y subunit C-3 (217 aa).

Over residues 1-28 (MDQQGQSSAMNYGSNPYQTNAMTTTPTG) the composition is skewed to polar residues. 2 disordered regions span residues 1–29 (MDQQGQSSAMNYGSNPYQTNAMTTTPTGS) and 198–217 (PYMGQPMWQQPGPEQQDPDN).

It belongs to the NFYC/HAP5 subunit family. Heterotrimeric transcription factor composed of three components, NF-YA, NF-YB and NF-YC. NF-YB and NF-YC must interact and dimerize for NF-YA association and DNA binding. As to expression, ubiquitous.

The protein resides in the nucleus. Functionally, stimulates the transcription of various genes by recognizing and binding to a CCAAT motif in promoters. In Arabidopsis thaliana (Mouse-ear cress), this protein is Nuclear transcription factor Y subunit C-3 (NFYC3).